Reading from the N-terminus, the 202-residue chain is Cytochrome c biogenesis ATP-binding export protein CcmA (202 aa).

An ABC transporter domain is found at L3 to A200. G35–S42 is a binding site for ATP.

Belongs to the ABC transporter superfamily. CcmA exporter (TC 3.A.1.107) family. In terms of assembly, the complex is composed of two ATP-binding proteins (CcmA) and two transmembrane proteins (CcmB).

It is found in the cell inner membrane. The catalysed reaction is heme b(in) + ATP + H2O = heme b(out) + ADP + phosphate + H(+). Its function is as follows. Part of the ABC transporter complex CcmAB involved in the biogenesis of c-type cytochromes; once thought to export heme, this seems not to be the case, but its exact role is uncertain. Responsible for energy coupling to the transport system. In Chelativorans sp. (strain BNC1), this protein is Cytochrome c biogenesis ATP-binding export protein CcmA.